Consider the following 33-residue polypeptide: Ice-structuring protein SS-3 (33 aa).

It belongs to the type-I AFP family.

Functionally, antifreeze proteins lower the blood freezing point. The polypeptide is Ice-structuring protein SS-3 (Myoxocephalus scorpius (Shorthorn sculpin)).